Reading from the N-terminus, the 534-residue chain is MKAWASTGRGLRINNVWCQQRLLHPLPSRDDTHAIAFSSSPGKSDPEQEGVTGPNKKHSDLATIKQPTSGIRRQDASSSSCFAGRGSSGLEGCRDRRRPLRSYTNISLELAVGGPLTMVPQICHPVKARQPLVVHEWNIFRSIPSTFILTEEGPPRCHRFLGTELSYSSHPEIPIRIPRCRIRDAPLPHSPRITLHGHRNSGVPQRSAARSPAGTNGFIIPPWNHYMYEPECRLTRLCGQAPHSRVPPCGACAPNTTRSTRGVAGHIAKGLSRIVEPPLWIVILPPKRILPLPKGEPSIHYARCVNHFMIASKAATSAEKWKHHHPRFRRYHPSARARSGFMDQSFEDCSASLCYVSGTRPEIRKVRARMVGDPLLTGTPSEELLAATPTTHSIGLSAEDKYRSTAGRPTSRSARTILPRDDDVSNRSYRISASIHYCGECSKERNGLYRMQHIPRSSCAKTPARKHGGTIRVARDEYGPGVFRAPPPTPAEGRALLLIGVRRQGRTNWYSDMTRVDCVANHLRRERAPHTRCR.

The interval 29-95 (RDDTHAIAFS…GSSGLEGCRD (67 aa)) is disordered.

Belongs to the intron maturase 2 family. MatK subfamily.

The protein resides in the plastid. It localises to the chloroplast. In terms of biological role, usually encoded in the trnK tRNA gene intron. Probably assists in splicing its own and other chloroplast group II introns. The polypeptide is Probable maturase K (matK) (Selaginella uncinata (Blue spike-moss)).